The sequence spans 180 residues: Large ribosomal subunit protein uL6 (180 aa).

This sequence belongs to the universal ribosomal protein uL6 family. As to quaternary structure, part of the 50S ribosomal subunit.

This protein binds to the 23S rRNA, and is important in its secondary structure. It is located near the subunit interface in the base of the L7/L12 stalk, and near the tRNA binding site of the peptidyltransferase center. This Lachnoclostridium phytofermentans (strain ATCC 700394 / DSM 18823 / ISDg) (Clostridium phytofermentans) protein is Large ribosomal subunit protein uL6.